The chain runs to 156 residues: 6,7-dimethyl-8-ribityllumazine synthase (156 aa).

5-amino-6-(D-ribitylamino)uracil contacts are provided by residues phenylalanine 23, 57–59 (AYE), and 81–83 (AII). A (2S)-2-hydroxy-3-oxobutyl phosphate-binding site is contributed by 86–87 (GT). The Proton donor role is filled by histidine 89. Phenylalanine 114 serves as a coordination point for 5-amino-6-(D-ribitylamino)uracil. A (2S)-2-hydroxy-3-oxobutyl phosphate-binding site is contributed by arginine 128.

This sequence belongs to the DMRL synthase family.

It carries out the reaction (2S)-2-hydroxy-3-oxobutyl phosphate + 5-amino-6-(D-ribitylamino)uracil = 6,7-dimethyl-8-(1-D-ribityl)lumazine + phosphate + 2 H2O + H(+). It functions in the pathway cofactor biosynthesis; riboflavin biosynthesis; riboflavin from 2-hydroxy-3-oxobutyl phosphate and 5-amino-6-(D-ribitylamino)uracil: step 1/2. Catalyzes the formation of 6,7-dimethyl-8-ribityllumazine by condensation of 5-amino-6-(D-ribitylamino)uracil with 3,4-dihydroxy-2-butanone 4-phosphate. This is the penultimate step in the biosynthesis of riboflavin. The polypeptide is 6,7-dimethyl-8-ribityllumazine synthase (Helicobacter pylori (strain HPAG1)).